The sequence spans 250 residues: MKTKTILTALLSAIALTGCANNNDTKQVSERNDSLEDFNRTMWKFNYNVIDRYVLEPAAKGWNNYVPKPISSGLAGIANNLDEPVSFINRLIEGEPKKAFVHFNRFWINTVFGLGGFIDFASASKELRIDNQRGFGETLGSYGVDAGTYIVLPIYNATTPRQLTGAVVDAAYMYPFWQWVGGPWALVKYGVQAVDARAKNLNNAELLRQAQDPYITFREAYYQNLQFKVNDGKLVESKESLPDDILKEID.

The signal sequence occupies residues 1–18 (MKTKTILTALLSAIALTG). C19 is lipidated: N-palmitoyl cysteine. C19 carries S-diacylglycerol cysteine lipidation.

This sequence belongs to the MlaA family.

The protein resides in the cell outer membrane. Involved in a phospholipid transport pathway that maintains lipid asymmetry in the outer membrane by retrograde trafficking of phospholipids from the outer membrane to the inner membrane. The sequence is that of Intermembrane phospholipid transport system lipoprotein MlaA from Haemophilus influenzae (strain ATCC 51907 / DSM 11121 / KW20 / Rd).